Here is a 121-residue protein sequence, read N- to C-terminus: UPF0102 protein Dhaf_3740 (121 aa).

This sequence belongs to the UPF0102 family.

This is UPF0102 protein Dhaf_3740 from Desulfitobacterium hafniense (strain DSM 10664 / DCB-2).